Consider the following 214-residue polypeptide: Membrane antigen containing repeating peptides (214 aa).

Repeat copies occupy residues 1-14, 15-28, 29-42, and 43-56. The interval 1 to 31 is disordered; it reads QETSAKLADTEETLQETSAKLADTEETLQET. The interval 1 to 56 is 4 X 14 AA tandem repeats; that stretch reads QETSAKLADTEETLQETSAKLADTEETLQETSAKLADTEETLQETSAKLADTEETL. The segment at 180–214 is disordered; the sequence is CSLHPTPRRLGDVSNRENSIENKTRSASRLSGRLF. Residues 188–203 show a composition bias toward basic and acidic residues; sequence RLGDVSNRENSIENKT.

The protein localises to the membrane. This Leishmania major protein is Membrane antigen containing repeating peptides.